The following is a 119-amino-acid chain: ATP-dependent Clp protease adapter protein ClpS (119 aa).

It belongs to the ClpS family. As to quaternary structure, binds to the N-terminal domain of the chaperone ClpA.

Involved in the modulation of the specificity of the ClpAP-mediated ATP-dependent protein degradation. In Marinobacter nauticus (strain ATCC 700491 / DSM 11845 / VT8) (Marinobacter aquaeolei), this protein is ATP-dependent Clp protease adapter protein ClpS.